A 20-amino-acid polypeptide reads, in one-letter code: Cicerin (20 aa).

The disordered stretch occupies residues 1–20 (ARCENFADSYRQPPISSSQT).

In terms of biological role, has antifungal activity against B.cinerea, F.oxysporum and M.arachidicola. Inhibits cell-free translation in rabbit reticulocyte lysate system. The polypeptide is Cicerin (Cicer arietinum (Chickpea)).